Reading from the N-terminus, the 133-residue chain is Large ribosomal subunit protein uL16c (133 aa).

The protein belongs to the universal ribosomal protein uL16 family. In terms of assembly, part of the 50S ribosomal subunit.

The protein localises to the plastid. It localises to the chloroplast. This is Large ribosomal subunit protein uL16c from Liriodendron tulipifera (Tuliptree).